The sequence spans 277 residues: Phosphate import ATP-binding protein PstB 2 (277 aa).

One can recognise an ABC transporter domain in the interval 31-272 (IEVPGLSLFY…PAKKQTEDYI (242 aa)). 63–70 (GPSGCGKS) provides a ligand contact to ATP.

This sequence belongs to the ABC transporter superfamily. Phosphate importer (TC 3.A.1.7) family. In terms of assembly, the complex is composed of two ATP-binding proteins (PstB), two transmembrane proteins (PstC and PstA) and a solute-binding protein (PstS).

Its subcellular location is the cell inner membrane. The catalysed reaction is phosphate(out) + ATP + H2O = ADP + 2 phosphate(in) + H(+). Functionally, part of the ABC transporter complex PstSACB involved in phosphate import. Responsible for energy coupling to the transport system. This Pseudomonas putida (strain ATCC 47054 / DSM 6125 / CFBP 8728 / NCIMB 11950 / KT2440) protein is Phosphate import ATP-binding protein PstB 2.